The primary structure comprises 330 residues: 7,8-didemethyl-8-hydroxy-5-deazariboflavin synthase (330 aa).

The region spanning 5–245 (VTFSRNVFIP…SDVAVQVAPN (241 aa)) is the Radical SAM core domain. The [4Fe-4S] cluster site is built by cysteine 19, cysteine 23, and cysteine 26.

Belongs to the radical SAM superfamily. CofG family. As to quaternary structure, consists of two subunits, CofG and CofH. [4Fe-4S] cluster serves as cofactor.

It catalyses the reaction 5-amino-5-(4-hydroxybenzyl)-6-(D-ribitylimino)-5,6-dihydrouracil + S-adenosyl-L-methionine = 7,8-didemethyl-8-hydroxy-5-deazariboflavin + 5'-deoxyadenosine + L-methionine + NH4(+) + H(+). Its pathway is cofactor biosynthesis; coenzyme F0 biosynthesis. In terms of biological role, catalyzes the radical-mediated synthesis of 7,8-didemethyl-8-hydroxy-5-deazariboflavin from 5-amino-5-(4-hydroxybenzyl)-6-(D-ribitylimino)-5,6-dihydrouracil. This is 7,8-didemethyl-8-hydroxy-5-deazariboflavin synthase from Methanococcoides burtonii (strain DSM 6242 / NBRC 107633 / OCM 468 / ACE-M).